Reading from the N-terminus, the 416-residue chain is Adenosylhomocysteinase (416 aa).

Substrate is bound by residues T55, D126, and E151. NAD(+) is bound at residue 152–154 (TTT). Substrate is bound by residues K181 and D185. NAD(+) contacts are provided by residues N186, 215–220 (GYGWVG), E238, N273, 294–296 (AGH), and N341.

Belongs to the adenosylhomocysteinase family. The cofactor is NAD(+).

The protein resides in the cytoplasm. The enzyme catalyses S-adenosyl-L-homocysteine + H2O = L-homocysteine + adenosine. It functions in the pathway amino-acid biosynthesis; L-homocysteine biosynthesis; L-homocysteine from S-adenosyl-L-homocysteine: step 1/1. Functionally, may play a key role in the regulation of the intracellular concentration of adenosylhomocysteine. The polypeptide is Adenosylhomocysteinase (Aeropyrum pernix (strain ATCC 700893 / DSM 11879 / JCM 9820 / NBRC 100138 / K1)).